The primary structure comprises 1362 residues: DNA-directed RNA polymerase subunit beta (1362 aa).

It belongs to the RNA polymerase beta chain family. The RNAP catalytic core consists of 2 alpha, 1 beta, 1 beta' and 1 omega subunit. When a sigma factor is associated with the core the holoenzyme is formed, which can initiate transcription.

The catalysed reaction is RNA(n) + a ribonucleoside 5'-triphosphate = RNA(n+1) + diphosphate. Functionally, DNA-dependent RNA polymerase catalyzes the transcription of DNA into RNA using the four ribonucleoside triphosphates as substrates. The sequence is that of DNA-directed RNA polymerase subunit beta from Acinetobacter baylyi (strain ATCC 33305 / BD413 / ADP1).